Consider the following 317-residue polypeptide: MNEWTPIWVNLILILAVLFAFAAMLSWIERRLLGLWQDRYGPNRVGPFGVLQIVADSIKLLTKEDWIPPFADRAVFVLAPAIVAVTTLLAFAVVPIAPGIGVVDLNIGVLFFLAMSSLGVYSIVLGGWASNSKYPLLGGLRAAAQMLSYEVFMGLALMGVVMLAGSFNLRDIVAAQENLWFCIPQILGLATFAVAGIAEARRLPFDLPESENELVAGFHTEYSSMKFGLFFIGEYVGITLISAMIVTLFFGGWLGPVLPPLAWFLLKTFIVIICFVLLRAALPRPRYDQLMTYGWKVMLPVTLVNLLLTGAVVLSVA.

8 consecutive transmembrane segments (helical) span residues 7-27 (IWVN…MLSW), 74-94 (AVFV…FAVV), 107-127 (IGVL…VLGG), 147-167 (LSYE…AGSF), 179-199 (LWFC…GIAE), 230-250 (FFIG…TLFF), 257-277 (VLPP…CFVL), and 297-317 (VMLP…LSVA).

The protein belongs to the complex I subunit 1 family. As to quaternary structure, NDH-1 is composed of 14 different subunits. Subunits NuoA, H, J, K, L, M, N constitute the membrane sector of the complex.

Its subcellular location is the cell inner membrane. It catalyses the reaction a quinone + NADH + 5 H(+)(in) = a quinol + NAD(+) + 4 H(+)(out). In terms of biological role, NDH-1 shuttles electrons from NADH, via FMN and iron-sulfur (Fe-S) centers, to quinones in the respiratory chain. The immediate electron acceptor for the enzyme in this species is believed to be ubiquinone. Couples the redox reaction to proton translocation (for every two electrons transferred, four hydrogen ions are translocated across the cytoplasmic membrane), and thus conserves the redox energy in a proton gradient. This subunit may bind ubiquinone. The polypeptide is NADH-quinone oxidoreductase subunit H 1 (Nitrosospira multiformis (strain ATCC 25196 / NCIMB 11849 / C 71)).